The primary structure comprises 207 residues: Dephospho-CoA kinase (207 aa).

Residues 10–207 (ILGLTGGIGS…FYLTLRGGQS (198 aa)) enclose the DPCK domain. 18–23 (GSGKSA) serves as a coordination point for ATP.

Belongs to the CoaE family.

It localises to the cytoplasm. It carries out the reaction 3'-dephospho-CoA + ATP = ADP + CoA + H(+). It participates in cofactor biosynthesis; coenzyme A biosynthesis; CoA from (R)-pantothenate: step 5/5. Catalyzes the phosphorylation of the 3'-hydroxyl group of dephosphocoenzyme A to form coenzyme A. The protein is Dephospho-CoA kinase of Pseudomonas syringae pv. tomato (strain ATCC BAA-871 / DC3000).